The sequence spans 83 residues: RNA-binding protein Hfq (83 aa).

One can recognise a Sm domain in the interval 10-70 (DTFLNQVRKE…ISTVMPLRPI (61 aa)).

The protein belongs to the Hfq family. Homohexamer.

Its function is as follows. RNA chaperone that binds small regulatory RNA (sRNAs) and mRNAs to facilitate mRNA translational regulation in response to envelope stress, environmental stress and changes in metabolite concentrations. Also binds with high specificity to tRNAs. The polypeptide is RNA-binding protein Hfq (Desulfitobacterium hafniense (strain DSM 10664 / DCB-2)).